The sequence spans 388 residues: Methylthioribose-1-phosphate isomerase (388 aa).

The active-site Proton donor is the aspartate 253.

Belongs to the eIF-2B alpha/beta/delta subunits family. MtnA subfamily.

It is found in the cytoplasm. Its subcellular location is the nucleus. The enzyme catalyses 5-(methylsulfanyl)-alpha-D-ribose 1-phosphate = 5-(methylsulfanyl)-D-ribulose 1-phosphate. It functions in the pathway amino-acid biosynthesis; L-methionine biosynthesis via salvage pathway; L-methionine from S-methyl-5-thio-alpha-D-ribose 1-phosphate: step 1/6. In terms of biological role, catalyzes the interconversion of methylthioribose-1-phosphate (MTR-1-P) into methylthioribulose-1-phosphate (MTRu-1-P). The chain is Methylthioribose-1-phosphate isomerase from Fusarium vanettenii (strain ATCC MYA-4622 / CBS 123669 / FGSC 9596 / NRRL 45880 / 77-13-4) (Fusarium solani subsp. pisi).